A 185-amino-acid polypeptide reads, in one-letter code: Peptide deformylase (185 aa).

Fe cation is bound by residues Cys112 and His155. The active site involves Glu156. His159 serves as a coordination point for Fe cation.

It belongs to the polypeptide deformylase family. The cofactor is Fe(2+).

The enzyme catalyses N-terminal N-formyl-L-methionyl-[peptide] + H2O = N-terminal L-methionyl-[peptide] + formate. Its function is as follows. Removes the formyl group from the N-terminal Met of newly synthesized proteins. Requires at least a dipeptide for an efficient rate of reaction. N-terminal L-methionine is a prerequisite for activity but the enzyme has broad specificity at other positions. The chain is Peptide deformylase from Latilactobacillus sakei subsp. sakei (strain 23K) (Lactobacillus sakei subsp. sakei).